Reading from the N-terminus, the 258-residue chain is Short-chain dehydrogenase chyC (258 aa).

Arginine 37, aspartate 55, asparagine 81, tyrosine 154, lysine 158, valine 185, and threonine 187 together coordinate NADP(+). The active-site Proton donor is tyrosine 154. Lysine 158 acts as the Lowers pKa of active site Tyr in catalysis.

Belongs to the short-chain dehydrogenases/reductases (SDR) family.

Short-chain dehydrogenase; part of the gene cluster that mediates the biosynthesis of the yellow pigment chrysogine. the NRPS chyA mediates the condensation of anthranilic acid and alanine into the intermediate 2-(2-aminopropanamido)benzoic acid. The remainder of the pathway is highly branched yielding at least 13 chrysogine-related compounds. The malonyl transferase chyE converts 2-(2-aminopropanamido)benzoic acid and 2-(2-aminopropanamido)benzamidine into 2-(2-(2-carboxyacetamido)propanamido)benzoic acid and 3-((1-((2-carbamoylphenyl)amino)-1-oxopropan-2-yl)amino)-3-oxopropanoic acid, respectively. ChyD is an amidase, being responsible for the amidation of the carboxylic acid moiety of 2-(2-aminopropanamido)benzoic acid, 2-(2-(2-carboxyacetamido)propanamido)benzoic acid and 2-(2-((4-amino-1-carboxy-4-oxobutyl)amino)propanamido)benzoic acid. ChyC is involved in the same reactions as ChyD, but plays a more minor role in the amidation reactions compared to chyD. The oxidoreductases chyH and chyM are involved in oxidation reactions that form N-pyruvoylanthranilamide from 2-(2-aminopropanamido)benzamidine and (1-((2-carbamoylphenyl)amino)-1-oxopropan-2-yl)glutamine, respectively. N-pyruvoylanthranilamide is further converted via two further branches in the pathway, yielding chrysogine and additional chrysogine-related coumpounds. Chrysogine is likely formed by a spontaneous ring closure from N-pyruvoylanthranilamide. The chain is Short-chain dehydrogenase chyC from Penicillium rubens (strain ATCC 28089 / DSM 1075 / NRRL 1951 / Wisconsin 54-1255) (Penicillium chrysogenum).